A 293-amino-acid chain; its full sequence is Immediate early response gene 5-like protein (293 aa).

This sequence belongs to the IER family.

The sequence is that of Immediate early response gene 5-like protein (ier5l) from Xenopus laevis (African clawed frog).